A 208-amino-acid polypeptide reads, in one-letter code: 3-demethoxyubiquinol 3-hydroxylase (208 aa).

Positions 57, 87, 90, 139, 171, and 174 each coordinate Fe cation.

Belongs to the COQ7 family. Fe cation serves as cofactor.

It is found in the cell membrane. The enzyme catalyses a 5-methoxy-2-methyl-3-(all-trans-polyprenyl)benzene-1,4-diol + AH2 + O2 = a 3-demethylubiquinol + A + H2O. It functions in the pathway cofactor biosynthesis; ubiquinone biosynthesis. In terms of biological role, catalyzes the hydroxylation of 2-nonaprenyl-3-methyl-6-methoxy-1,4-benzoquinol during ubiquinone biosynthesis. The polypeptide is 3-demethoxyubiquinol 3-hydroxylase (Burkholderia mallei (strain NCTC 10229)).